A 238-amino-acid chain; its full sequence is Flagellar L-ring protein (238 aa).

A signal peptide spans 1-16 (MNKAILAVAMVLLLAG). Cys-17 is lipidated: N-palmitoyl cysteine. Cys-17 is lipidated: S-diacylglycerol cysteine.

The protein belongs to the FlgH family. As to quaternary structure, the basal body constitutes a major portion of the flagellar organelle and consists of four rings (L,P,S, and M) mounted on a central rod.

The protein resides in the cell outer membrane. The protein localises to the bacterial flagellum basal body. Assembles around the rod to form the L-ring and probably protects the motor/basal body from shearing forces during rotation. The protein is Flagellar L-ring protein of Brucella abortus (strain 2308).